The sequence spans 249 residues: Large ribosomal subunit protein uL4 (249 aa).

The protein belongs to the universal ribosomal protein uL4 family. Part of the 50S ribosomal subunit.

Its function is as follows. One of the primary rRNA binding proteins, this protein initially binds near the 5'-end of the 23S rRNA. It is important during the early stages of 50S assembly. It makes multiple contacts with different domains of the 23S rRNA in the assembled 50S subunit and ribosome. Forms part of the polypeptide exit tunnel. The sequence is that of Large ribosomal subunit protein uL4 from Methanoculleus marisnigri (strain ATCC 35101 / DSM 1498 / JR1).